Reading from the N-terminus, the 160-residue chain is Cyanate hydratase (160 aa).

Catalysis depends on residues Arg100, Glu103, and Ser126.

This sequence belongs to the cyanase family.

The catalysed reaction is cyanate + hydrogencarbonate + 3 H(+) = NH4(+) + 2 CO2. Catalyzes the reaction of cyanate with bicarbonate to produce ammonia and carbon dioxide. The sequence is that of Cyanate hydratase from Aspergillus flavus (strain ATCC 200026 / FGSC A1120 / IAM 13836 / NRRL 3357 / JCM 12722 / SRRC 167).